Here is a 237-residue protein sequence, read N- to C-terminus: Cytochrome c oxidase subunit 2 (237 aa).

Over 1–30 (MNLVAPTPWGLFFQDSATPQMEGIEELHNN) the chain is Mitochondrial intermembrane. A helical membrane pass occupies residues 31–51 (IMFYLTIILFSVTWMMITIIK). Residues 52–67 (SFVNTKSPISHKYMNH) lie on the Mitochondrial matrix side of the membrane. Residues 68 to 94 (GTLIELIWTITPAVILILIAFPSFKLL) form a helical membrane-spanning segment. Residues 95 to 237 (YLMDEVMDPS…SVSLKNFYYD (143 aa)) are Mitochondrial intermembrane-facing. Residues His-176, Cys-211, Glu-213, Cys-215, His-219, and Met-222 each contribute to the Cu cation site. A Mg(2+)-binding site is contributed by Glu-213.

It belongs to the cytochrome c oxidase subunit 2 family. Component of the cytochrome c oxidase (complex IV, CIV), a multisubunit enzyme composed of a catalytic core of 3 subunits and several supernumerary subunits. The complex exists as a monomer or a dimer and forms supercomplexes (SCs) in the inner mitochondrial membrane with ubiquinol-cytochrome c oxidoreductase (cytochrome b-c1 complex, complex III, CIII). Cu cation is required as a cofactor.

It localises to the mitochondrion inner membrane. It catalyses the reaction 4 Fe(II)-[cytochrome c] + O2 + 8 H(+)(in) = 4 Fe(III)-[cytochrome c] + 2 H2O + 4 H(+)(out). Its function is as follows. Component of the cytochrome c oxidase, the last enzyme in the mitochondrial electron transport chain which drives oxidative phosphorylation. The respiratory chain contains 3 multisubunit complexes succinate dehydrogenase (complex II, CII), ubiquinol-cytochrome c oxidoreductase (cytochrome b-c1 complex, complex III, CIII) and cytochrome c oxidase (complex IV, CIV), that cooperate to transfer electrons derived from NADH and succinate to molecular oxygen, creating an electrochemical gradient over the inner membrane that drives transmembrane transport and the ATP synthase. Cytochrome c oxidase is the component of the respiratory chain that catalyzes the reduction of oxygen to water. Electrons originating from reduced cytochrome c in the intermembrane space (IMS) are transferred via the dinuclear copper A center (CU(A)) of subunit 2 and heme A of subunit 1 to the active site in subunit 1, a binuclear center (BNC) formed by heme A3 and copper B (CU(B)). The BNC reduces molecular oxygen to 2 water molecules using 4 electrons from cytochrome c in the IMS and 4 protons from the mitochondrial matrix. The polypeptide is Cytochrome c oxidase subunit 2 (COX2) (Trichophyton rubrum (Athlete's foot fungus)).